A 294-amino-acid chain; its full sequence is Elongation factor Ts (294 aa).

The segment at 79 to 82 (TDFV) is involved in Mg(2+) ion dislocation from EF-Tu.

This sequence belongs to the EF-Ts family.

The protein resides in the cytoplasm. Associates with the EF-Tu.GDP complex and induces the exchange of GDP to GTP. It remains bound to the aminoacyl-tRNA.EF-Tu.GTP complex up to the GTP hydrolysis stage on the ribosome. In Shouchella clausii (strain KSM-K16) (Alkalihalobacillus clausii), this protein is Elongation factor Ts.